The following is a 134-amino-acid chain: TSC22 domain family protein 3 (134 aa).

Methionine 1 is modified (N-acetylmethionine). Residues methionine 1–leucine 60 form an AP1-binding region. Alanine 42 and valine 73 each carry phosphoserine. Residues leucine 76–leucine 97 form a leucine-zipper region. At serine 102 the chain carries Phosphoserine. A disordered region spans residues lysine 108–valine 134.

The protein belongs to the TSC-22/Dip/Bun family. In terms of assembly, can form homodimers, however it is likely to function as a monomer. Interacts with NFKB1. Interacts (via N-terminus) with JUN and FOS; these interactions inhibit the binding of active AP1 to its target DNA. Interacts with MYOD1. Interacts with HDAC1; this interaction affects HDAC1 activity on MYOG promoter and thus inhibits MYOD1 transcriptional activity. In terms of tissue distribution, ubiquitously expressed, including in the fetal brain and liver. Expressed in brain, lung, spleen and skeletal muscle. Lower levels detected in heart and kidney. Not detected in the pancreas. In non-lymphoid tissues, in the absence of inflammation, the major source of constitutive expression is the macrophage lineage. Also expressed in cells from different hemopoietic cell lineages, including bone marrow cells, CD34+ stem cells, mature B- and T-cells, monocytes and granulocytes. Down-regulated in activated macrophages from inflammatory lesions of delayed-type hypersensitivity (DTH) reactions, such as in tuberculosis and in Crohn disease, whereas in Burkitt lymphoma, persists in macrophages involved in the phagocytosis of apoptotic malignant cells.

It is found in the cytoplasm. It localises to the nucleus. Protects T-cells from IL2 deprivation-induced apoptosis through the inhibition of FOXO3A transcriptional activity that leads to the down-regulation of the pro-apoptotic factor BCL2L11. In macrophages, plays a role in the anti-inflammatory and immunosuppressive effects of glucocorticoids and IL10. In T-cells, inhibits anti-CD3-induced NFKB1 nuclear translocation and thereby NFKB1 DNA-binding activities. In vitro, suppresses AP-1 transcription factor complex DNA-binding activities. Functionally, inhibits myogenic differentiation and mediates anti-myogenic effects of glucocorticoids by binding and regulating MYOD1 and HDAC1 transcriptional activity resulting in reduced expression of MYOG. This is TSC22 domain family protein 3 from Homo sapiens (Human).